Consider the following 178-residue polypeptide: MDETVYQIKAIIVLDNNGKRLCSCFYDPPGTPITPLTEKDKFEKLIFEKCKTSNCELEIIDNKVVIGSKQSDVWIFVVGNSLNSNELALLDVLNTLISLFKKACATDESIMITKKTFLENYALIRLYIDEIVSDGIIFEVDEETILNRVPIADNAAQSLNEAIEMAKEKAKGFGFGFL.

This sequence belongs to the adaptor complexes small subunit family. As to quaternary structure, oligomeric complex that consists of at least the alpha, beta, beta', gamma, delta, epsilon and zeta subunits.

It localises to the cytoplasm. The protein localises to the golgi apparatus membrane. Its subcellular location is the cytoplasmic vesicle. It is found in the COPI-coated vesicle membrane. The coatomer is a cytosolic protein complex that binds to dilysine motifs and reversibly associates with Golgi non-clathrin-coated vesicles, which further mediate biosynthetic protein transport from the ER, via the Golgi up to the trans Golgi network. Coatomer complex is required for budding from Golgi membranes, and is essential for the retrograde Golgi-to-ER transport of dilysine-tagged proteins. The zeta subunit may be involved in regulating the coat assembly and, hence, the rate of biosynthetic protein transport due to its association-dissociation properties with the coatomer complex. This is Probable coatomer subunit zeta-B (copZb) from Dictyostelium discoideum (Social amoeba).